Consider the following 281-residue polypeptide: Aquaporin-9 (281 aa).

Residues 1-17 lie on the Cytoplasmic side of the membrane; sequence MGAFVNTKVYIENKNIR. Residues 18–36 traverse the membrane as a helical segment; sequence DWLSEALSMFMYMSLLLGS. At 37–50 the chain is on the extracellular side; it reads AATGHFSGREDDAL. A helical membrane pass occupies residues 51–69; that stretch reads FGVIFQGFSITFGIYIGGA. Residues 70 to 71 lie on the Cytoplasmic side of the membrane; that stretch reads MS. The segment at residues 72 to 84 is an intramembrane region (discontinuously helical); that stretch reads GAIINPALTLAVA. The NPA 1 motif lies at 76–78; that stretch reads NPA. Residues 85–90 lie on the Cytoplasmic side of the membrane; the sequence is LLGKIS. Residues 91–115 form a helical membrane-spanning segment; sequence WRKCIVLQSAQYIGSFIASAVVYLI. At 116–157 the chain is on the extracellular side; the sequence is YNDSLDAFGAGANFTATEPGVFRKDVAGIWSTFPKTYLKERG. N-linked (GlcNAc...) asparagine glycans are attached at residues asparagine 117 and asparagine 128. A helical membrane pass occupies residues 158 to 175; sequence AIFNQIFCSMLLTFGFLA. Over 176 to 187 the chain is Cytoplasmic; it reads ISDYKNFRPSKG. The helical transmembrane segment at 188–204 threads the bilayer; that stretch reads LFPIAVGLLVMTVFLAF. Over 205–207 the chain is Extracellular; that stretch reads SYS. Residues 208–222 constitute an intramembrane region (discontinuously helical); that stretch reads TGAAMNPARDFSPRL. The NPA 2 motif lies at 213–215; the sequence is NPA. Over 223-241 the chain is Extracellular; the sequence is WSLIIGYGIEVFSYNQYEW. The chain crosses the membrane as a helical span at residues 242–262; sequence FWIPWLMPYVGAMLGALIYQL. At 263–281 the chain is on the cytoplasmic side; the sequence is LIGAQWSKGQKGESKHKDP.

This sequence belongs to the MIP/aquaporin (TC 1.A.8) family.

It is found in the cell membrane. It carries out the reaction H2O(in) = H2O(out). In terms of biological role, aquaglyceroporin that may modulate the water content and osmolytes during anhydrobiosis. This chain is Aquaporin-9, found in Milnesium tardigradum (Water bear).